A 538-amino-acid polypeptide reads, in one-letter code: Probable folate-biopterin transporter 9, chloroplastic (538 aa).

The N-terminal 57 residues, 1–57 (MNNPLLSISNPVKFFKPPIPYRISLNTTINKKQKHQSKTLVVKSNKRSTTSLTSSVS), are a transit peptide targeting the chloroplast. 12 helical membrane passes run 85–105 (VLLC…WLAL), 129–149 (LPMV…IGGA), 152–172 (VPYI…LAIF), 178–198 (VLPS…ITEV), 220–240 (ALMA…YCLL), 246–266 (ILFL…LSSK), 309–329 (LIWI…VFCY), 339–359 (SVIG…TVVY), 370–390 (ALIH…YILV), 395–415 (LAFG…AEIL), 447–467 (LCLS…MIGI), and 479–499 (ILIQ…VPML).

Belongs to the major facilitator superfamily. Folate-biopterin transporter (TC 2.A.71) family.

The protein resides in the plastid. It localises to the chloroplast membrane. Could mediate folate transport. The protein is Probable folate-biopterin transporter 9, chloroplastic of Arabidopsis thaliana (Mouse-ear cress).